A 276-amino-acid polypeptide reads, in one-letter code: Glutamate 5-kinase (276 aa).

Lysine 14 contacts ATP. Substrate contacts are provided by serine 54, aspartate 141, and asparagine 157. ATP-binding positions include 177-178 (SD) and 219-225 (TGGMLTK).

Belongs to the glutamate 5-kinase family.

The protein localises to the cytoplasm. The enzyme catalyses L-glutamate + ATP = L-glutamyl 5-phosphate + ADP. It participates in amino-acid biosynthesis; L-proline biosynthesis; L-glutamate 5-semialdehyde from L-glutamate: step 1/2. Functionally, catalyzes the transfer of a phosphate group to glutamate to form L-glutamate 5-phosphate. This chain is Glutamate 5-kinase, found in Listeria monocytogenes serovar 1/2a (strain ATCC BAA-679 / EGD-e).